We begin with the raw amino-acid sequence, 341 residues long: Homeobox protein knotted-1-like 8 (341 aa).

Positions 1 to 17 (MESFASLAGGGSSSTTA) are enriched in low complexity. 3 disordered regions span residues 1–72 (MESF…AVQG), 121–148 (AAQQLDEADGHPRRRHEPQRDDDPDQLD), and 187–207 (AESNCEGTGSSEEEQDPSDKQ). Over residues 187–196 (AESNCEGTGS) the composition is skewed to polar residues. Positions 207–227 (QLKHQLLRKYGGSLGDLRQVF) constitute an ELK domain. Residues 228–291 (SKRTKKGKLP…NQRKRHWKPT (64 aa)) constitute a DNA-binding region (homeobox; TALE-type).

The protein belongs to the TALE/KNOX homeobox family.

Its subcellular location is the nucleus. In terms of biological role, probable transcription factor that may be involved in shoot formation during embryogenesis. The chain is Homeobox protein knotted-1-like 8 (OSH43) from Oryza sativa subsp. japonica (Rice).